The primary structure comprises 251 residues: Precorrin-4 C(11)-methyltransferase (251 aa).

Belongs to the precorrin methyltransferase family.

It catalyses the reaction precorrin-4 + S-adenosyl-L-methionine = precorrin-5 + S-adenosyl-L-homocysteine. It functions in the pathway cofactor biosynthesis; adenosylcobalamin biosynthesis; cob(II)yrinate a,c-diamide from precorrin-2 (aerobic route): step 4/10. Its function is as follows. Catalyzes the methylation of C-11 in precorrin-4 to form precorrin-5. The protein is Precorrin-4 C(11)-methyltransferase (cobM) of Mycobacterium tuberculosis (strain CDC 1551 / Oshkosh).